The sequence spans 189 residues: uncharacterized protein (189 aa).

This sequence belongs to the flavoredoxin family. FMN serves as cofactor.

This is an uncharacterized protein from Escherichia coli (strain K12).